The sequence spans 343 residues: Selenide, water dikinase (343 aa).

The active site involves C15. ATP contacts are provided by residues K18 and 46–48 (NKD). D49 is a Mg(2+) binding site. Residues D66, D89, and 137-139 (GHS) each bind ATP. D89 lines the Mg(2+) pocket. D225 is a binding site for Mg(2+).

The protein belongs to the selenophosphate synthase 1 family. Class I subfamily. Homodimer. Mg(2+) serves as cofactor.

It carries out the reaction hydrogenselenide + ATP + H2O = selenophosphate + AMP + phosphate + 2 H(+). Synthesizes selenophosphate from selenide and ATP. This chain is Selenide, water dikinase, found in Sulfurovum sp. (strain NBC37-1).